A 156-amino-acid chain; its full sequence is MKFNDVYNKHHKIIHHLLKKYNISYNYDEYYQLLLIKMWQLSQIYKPSSKQSLSSFLFTRLNFYLIDLFRQQNQLKDVILCENNSPTLTEQPTYFNEHDLRLQDIFKLLNQRERLWLKLYLEGYKQFEIAEIMSLSLSTIKLIKMSVKRKCQHNFN.

The short motif at 29–44 (EYYQLLLIKMWQLSQI) is the Polymerase core binding element. The H-T-H motif DNA-binding region spans 126–145 (QFEIAEIMSLSLSTIKLIKM).

Belongs to the sigma-70 factor family.

Functionally, sigma factors are initiation factors that promote the attachment of RNA polymerase to specific initiation sites and are then released. Sigma-S contributes to the protection against external stress, thus playing a role in cellular fitness and survival. The protein is RNA polymerase sigma factor SigS (sigS) of Staphylococcus aureus (strain COL).